The primary structure comprises 344 residues: UDP-N-acetylenolpyruvoylglucosamine reductase (344 aa).

The 171-residue stretch at 17 to 187 (VDYACSELIS…TGVGIKLAKK (171 aa)) folds into the FAD-binding PCMH-type domain. Arg163 is a catalytic residue. Ser233 (proton donor) is an active-site residue. The active site involves Glu329.

It belongs to the MurB family. FAD serves as cofactor.

It localises to the cytoplasm. It catalyses the reaction UDP-N-acetyl-alpha-D-muramate + NADP(+) = UDP-N-acetyl-3-O-(1-carboxyvinyl)-alpha-D-glucosamine + NADPH + H(+). It participates in cell wall biogenesis; peptidoglycan biosynthesis. Functionally, cell wall formation. The polypeptide is UDP-N-acetylenolpyruvoylglucosamine reductase (Shewanella sediminis (strain HAW-EB3)).